A 1464-amino-acid polypeptide reads, in one-letter code: Collagen alpha-1(III) chain (1464 aa).

Residues 1–23 (MMSFVQSGTWFLLTLLHPTLILA) form the signal peptide. The propeptide at 24 to 154 (QQSNVDELGC…CPTGGQNYSP (131 aa)) is N-terminal propeptide. The region spanning 31-90 (LGCSHLGQSYESRDVWKPEPCQICVCDSGSVLCDDIICDEEPLDCPNPEIPFGECCAICP) is the VWFC domain. The segment at 97-1195 (PVLPDGHGPQ…PGPPGAPGPC (1099 aa)) is disordered. The segment covering 100–109 (PDGHGPQGPK) has biased composition (low complexity). Residues 147–156 (TGGQNYSPQF) are compositionally biased toward polar residues. The interval 155–169 (QFDSYDVKSGVGGMG) is nonhelical region (N-terminal). Gly residues predominate over residues 164–173 (GVGGMGGYPG). Residues 170 to 1195 (GYPGPAGPPG…PGPPGAPGPC (1026 aa)) are triple-helical region. Pro residues predominate over residues 174–184 (PAGPPGPPGPP). Low complexity predominate over residues 186–198 (SSGHPGSPGSPGY). Over residues 228-240 (KDGESGRPGRPGE) the composition is skewed to basic and acidic residues. A 5-hydroxylysine; alternate modification is found at Lys-262. O-linked (Gal...) hydroxylysine; alternate glycosylation occurs at Lys-262. A compositionally biased stretch (basic and acidic residues) spans 265 to 276 (RGFDGRNGEKGE). At Lys-283 the chain carries 5-hydroxylysine. 2 stretches are compositionally biased toward low complexity: residues 310–321 (PGLPGAAGARGN) and 354–379 (PAGS…AGAQ). The span at 389–398 (GSPGGKGEMG) shows a compositional bias: gly residues. The segment covering 399 to 412 (PAGIPGAPGLIGAR) has biased composition (low complexity). Positions 527–548 (GTPGGPGIRGMPGSPGGPGNDG) are enriched in gly residues. Residues 606-615 (PAGKNGETGP) are compositionally biased toward low complexity. 2 stretches are compositionally biased toward gly residues: residues 641-650 (GIPGTGGPPG) and 668-677 (GAPGGKGDSG). Residues 678–691 (APGERGPPGTAGIP) are compositionally biased toward low complexity. Residues 692-708 (GARGGAGPPGPEGGKGP) show a composition bias toward gly residues. The segment covering 717–727 (ASGSPGLQGMP) has biased composition (low complexity). The segment covering 822–834 (AKGERGAPGEKGE) has biased composition (basic and acidic residues). Lys-859 is modified (5-hydroxylysine). The span at 863-879 (GSPGGPGTAGFPGGRGL) shows a compositional bias: gly residues. The segment covering 889–906 (PGPPGPSGAPGKDGPPGP) has biased composition (pro residues). Composition is skewed to low complexity over residues 907–934 (AGNS…KGPP) and 945–960 (PLGI…LAGP). Lys-976 is subject to 5-hydroxylysine. A compositionally biased stretch (pro residues) spans 1045-1054 (PGHPGPPGPV). The segment covering 1068–1084 (PAGPSGAPGPAGARGAP) has biased composition (low complexity). Lys-1093 and Lys-1105 each carry 5-hydroxylysine. The segment covering 1120-1132 (PGAAGHQGAIGSP) has biased composition (low complexity). Residues 1180–1192 (PGQPGPPGPPGAP) show a composition bias toward pro residues. Residues 1220–1464 (DDPMDFKINT…GVDIGPVCFL (245 aa)) constitute a propeptide, C-terminal propeptide. Residues 1230–1464 (EEIMSSLKSV…GVDIGPVCFL (235 aa)) enclose the Fibrillar collagen NC1 domain. Cystine bridges form between Cys-1260–Cys-1292, Cys-1300–Cys-1462, and Cys-1370–Cys-1415. Ca(2+) contacts are provided by Asp-1278, Asn-1280, Gln-1281, Cys-1283, and Asp-1286.

It belongs to the fibrillar collagen family. As to quaternary structure, trimers of identical alpha 1(III) chains. The chains are linked to each other by interchain disulfide bonds. Trimers are also cross-linked via hydroxylysines. Interacts with ADGRG1. Proline residues at the third position of the tripeptide repeating unit (G-X-Y) are hydroxylated in some or all of the chains. Post-translationally, O-linked glycan consists of a Glc-Gal disaccharide bound to the oxygen atom of a post-translationally added hydroxyl group. As to expression, expressed in embryonic brain, specifically in the meninges, pial basement membrane and blood vessels (at protein level).

The protein resides in the secreted. It localises to the extracellular space. Its subcellular location is the extracellular matrix. In terms of biological role, collagen type III occurs in most soft connective tissues along with type I collagen. Involved in regulation of cortical development. Is the major ligand of ADGRG1 in the developing brain and binding to ADGRG1 inhibits neuronal migration and activates the RhoA pathway by coupling ADGRG1 to GNA13 and possibly GNA12. This chain is Collagen alpha-1(III) chain (Col3a1), found in Mus musculus (Mouse).